Consider the following 118-residue polypeptide: uncharacterized protein (118 aa).

The 99-residue stretch at 6–104 folds into the HTH hxlR-type domain; that stretch reads CGFEVTKEVI…WGGYYAEQEY (99 aa).

This is an uncharacterized protein from Bacillus subtilis (strain 168).